Here is a 200-residue protein sequence, read N- to C-terminus: NADH-quinone oxidoreductase chain 10 (200 aa).

The next 5 membrane-spanning stretches (helical) occupy residues 2 to 22 (MTFA…MVVI), 26 to 46 (PVHS…LFVL), 51 to 71 (FVAM…FLFV), 90 to 110 (LPLA…AFSG), and 144 to 164 (VLMF…AIVL).

This sequence belongs to the complex I subunit 6 family. NDH-1 is composed of at least 14 different subunits, Nqo1 to Nqo14. The complex has a L-shaped structure, with the hydrophobic arm (subunits Nqo7, Nqo8, Nqo10 to Nqo14) embedded in the inner membrane and the hydrophilic peripheral arm (subunits Nqo1 to Nqo6, Nqo9) protruding into the bacterial cytoplasm. The hydrophilic domain contains all the redox centers.

It is found in the cell inner membrane. The enzyme catalyses a quinone + NADH + 5 H(+)(in) = a quinol + NAD(+) + 4 H(+)(out). NDH-1 shuttles electrons from NADH, via FMN and iron-sulfur (Fe-S) centers, to quinones in the respiratory chain. The immediate electron acceptor for the enzyme in this species is believed to be ubiquinone. Couples the redox reaction to proton translocation (for every two electrons transferred, four hydrogen ions are translocated across the cytoplasmic membrane), and thus conserves the redox energy in a proton gradient. This Paracoccus denitrificans protein is NADH-quinone oxidoreductase chain 10.